A 1976-amino-acid chain; its full sequence is Putative callose synthase 8 (1976 aa).

At 1–530 the chain is on the cytoplasmic side; it reads MSHEIVPVDP…FWQIFRSFDR (530 aa). The chain crosses the membrane as a helical span at residues 531–551; that stretch reads MWSFFVLSLQALIIMACHDVG. Residues 552–565 are Extracellular-facing; sequence SPLQVFNANIFEDV. A helical membrane pass occupies residues 566-586; sequence MSIFITSAILKLIKGILDIIF. Topologically, residues 587-602 are cytoplasmic; sequence KWKARNTMPINEKKKR. Residues 603–623 form a helical membrane-spanning segment; it reads LVKLGFAAMWTIILPVLYSHS. The Extracellular portion of the chain corresponds to 624-648; it reads RRKYICYFTNYKTWLGEWCFSPYMV. A helical membrane pass occupies residues 649 to 669; it reads AVTIYLTGSAIELVLFFVPAI. At 670 to 707 the chain is on the cytoplasmic side; sequence SKYIETSNHGIFKTLSWWGQPRLYVGRGMQETQVSQFK. Residues 708 to 728 form a helical membrane-spanning segment; that stretch reads YTFFWILVLLTKFAFSYAFEI. Topologically, residues 729–759 are extracellular; that stretch reads KPLIEPTRLIMKVGVRNYEWHEIFPEVKSNA. The chain crosses the membrane as a helical span at residues 760–780; it reads AAIVAVWAPIMVVYFMDTQIW. The Cytoplasmic portion of the chain corresponds to 781-1544; it reads YSVYCTIFGG…FDFFRMLSCY (764 aa). The chain crosses the membrane as a helical span at residues 1545–1565; that stretch reads FTTIGFYFSSLISVIGIYIYL. The Extracellular segment spans residues 1566–1595; the sequence is YGQLYLVLSGLQKTLILEAKVKNIKSLETA. The helical transmembrane segment at 1596-1616 threads the bilayer; the sequence is LASQSFIQLGLLTGLPMVMEI. The Cytoplasmic segment spans residues 1617–1620; that stretch reads GLEK. The helical transmembrane segment at 1621-1641 threads the bilayer; that stretch reads GFLIAFQDFILMQLQLAAFFF. Residues 1642–1688 lie on the Extracellular side of the membrane; the sequence is TFSLGTKTHYFGRTILHGGAKYRPTGRKVVVFHANFSENYRLYSRSH. Asn1676 carries an N-linked (GlcNAc...) asparagine glycan. Residues 1689-1709 form a helical membrane-spanning segment; the sequence is FIKGFELMILLVVYELFKHTS. At 1710-1715 the chain is on the cytoplasmic side; it reads QSNMAY. A helical membrane pass occupies residues 1716-1736; it reads SFITFSVWFMSFTWLCAPFLF. Residues 1737-1790 lie on the Extracellular side of the membrane; it reads NPSGFTWEIIVGDWRDWNRWIKEQGGIGIQQDKSWQSWWNDEQAHLRGSGVGAR. The chain crosses the membrane as a helical span at residues 1791 to 1811; that stretch reads CLEIILSLRFFVYQYGLVYHL. The Cytoplasmic segment spans residues 1812–1819; that stretch reads DITQSNTN. Residues 1820 to 1840 form a helical membrane-spanning segment; that stretch reads IIVYALSWVVILATFFTVKAV. The Extracellular portion of the chain corresponds to 1841–1856; the sequence is DLGRQLFSTRKHLVFR. The helical transmembrane segment at 1857 to 1877 threads the bilayer; that stretch reads FFKVFVFVSILTIIITLANIC. Residues 1878 to 1884 are Cytoplasmic-facing; it reads HLSVKDL. The helical transmembrane segment at 1885–1905 threads the bilayer; it reads LVSCLAFLPTGWGLILIAQAV. Topologically, residues 1906–1928 are extracellular; the sequence is RPKIEGTSLWEFTQVLARAYDYG. Residues 1929–1949 form a helical membrane-spanning segment; the sequence is MGVVLFAPMAILAWLPIISAF. The Cytoplasmic segment spans residues 1950-1976; sequence QTRFLFNEAFNRRLQIQPILAGKKKNR.

Belongs to the glycosyltransferase 48 family.

Its subcellular location is the cell membrane. The enzyme catalyses [(1-&gt;3)-beta-D-glucosyl](n) + UDP-alpha-D-glucose = [(1-&gt;3)-beta-D-glucosyl](n+1) + UDP + H(+). Its function is as follows. Involved in callose synthesis at the forming cell plate during cytokinesis. During plant growth and development, callose is found as a transitory component of the cell plate in dividing cells, is a major component of pollen mother cell walls and pollen tubes, and is found as a structural component of plasmodesmatal canals. The polypeptide is Putative callose synthase 8 (CALS8) (Arabidopsis thaliana (Mouse-ear cress)).